The primary structure comprises 472 residues: Siroheme synthase 1 (472 aa).

The segment at 1–203 (MDYLPLFADL…GQLTEAENEL (203 aa)) is precorrin-2 dehydrogenase /sirohydrochlorin ferrochelatase. NAD(+) contacts are provided by residues 22-23 (EV) and 43-44 (QT). A Phosphoserine modification is found at Ser128. The tract at residues 215–472 (GEVALVGAGP…AISPSVVNLA (258 aa)) is uroporphyrinogen-III C-methyltransferase. Position 224 (Pro224) interacts with S-adenosyl-L-methionine. The active-site Proton acceptor is the Asp247. Catalysis depends on Lys269, which acts as the Proton donor. S-adenosyl-L-methionine-binding positions include 300-302 (GGD), Ile305, 330-331 (TA), Met382, and Gly411.

This sequence in the N-terminal section; belongs to the precorrin-2 dehydrogenase / sirohydrochlorin ferrochelatase family. In the C-terminal section; belongs to the precorrin methyltransferase family.

It carries out the reaction uroporphyrinogen III + 2 S-adenosyl-L-methionine = precorrin-2 + 2 S-adenosyl-L-homocysteine + H(+). The catalysed reaction is precorrin-2 + NAD(+) = sirohydrochlorin + NADH + 2 H(+). The enzyme catalyses siroheme + 2 H(+) = sirohydrochlorin + Fe(2+). It participates in cofactor biosynthesis; adenosylcobalamin biosynthesis; precorrin-2 from uroporphyrinogen III: step 1/1. Its pathway is cofactor biosynthesis; adenosylcobalamin biosynthesis; sirohydrochlorin from precorrin-2: step 1/1. It functions in the pathway porphyrin-containing compound metabolism; siroheme biosynthesis; precorrin-2 from uroporphyrinogen III: step 1/1. The protein operates within porphyrin-containing compound metabolism; siroheme biosynthesis; siroheme from sirohydrochlorin: step 1/1. It participates in porphyrin-containing compound metabolism; siroheme biosynthesis; sirohydrochlorin from precorrin-2: step 1/1. Multifunctional enzyme that catalyzes the SAM-dependent methylations of uroporphyrinogen III at position C-2 and C-7 to form precorrin-2 via precorrin-1. Then it catalyzes the NAD-dependent ring dehydrogenation of precorrin-2 to yield sirohydrochlorin. Finally, it catalyzes the ferrochelation of sirohydrochlorin to yield siroheme. This Yersinia pestis bv. Antiqua (strain Nepal516) protein is Siroheme synthase 1.